The following is a 359-amino-acid chain: MDMENNLQDLKKKFNDIERNLENPTNLSQKEFITLSKEYSELRPIIKIIDEYNTLKEEISDLEEIMKDENSEGDIKELAKEEFFEKHKVLLPKIKAKLKLALLPKDEDDSRNAILEIRAGTGGEEAALFAAMLFRMYQKYAERRNWKFEPISISNTGIGGYKEASALINGTEVFARLKFESGVHRVQRVPETESSGRLHTSAATVAILPEVEEVDFKIEEKDLRIDVYRSSGPGGQSVNTTDSAVRVTHLPTGIVVIQQDEKSQHKNKAKALKVLRARLYEIERQKKEMERSTMRKSQIGSGDRSERIRTYNFPQSRITDHRINLTSHRLEQIIKEGELDEFIEALISRNEAERLAGES.

Glutamine 236 is modified (N5-methylglutamine). The interval lysine 286–serine 305 is disordered.

It belongs to the prokaryotic/mitochondrial release factor family. Post-translationally, methylated by PrmC. Methylation increases the termination efficiency of RF1.

The protein resides in the cytoplasm. Functionally, peptide chain release factor 1 directs the termination of translation in response to the peptide chain termination codons UAG and UAA. The sequence is that of Peptide chain release factor 1 from Wolbachia pipientis wMel.